Here is a 677-residue protein sequence, read N- to C-terminus: UvrABC system protein B (677 aa).

In terms of domain architecture, Helicase ATP-binding spans 27-192 (ANLGQGVRDQ…QRNDFDFHRG (166 aa)). An ATP-binding site is contributed by 40 to 47 (GVTGSGKT). A Beta-hairpin motif is present at residues 93-116 (YYDYYQPEAYVPASDTYIEKDSSI). The 163-residue stretch at 432–594 (QVDDLLAECR…IEPRTIRKSL (163 aa)) folds into the Helicase C-terminal domain. The UVR domain maps to 638 to 673 (AKHIQKLEREMREAAKELEFERAATLRDRIRLLRER).

Belongs to the UvrB family. In terms of assembly, forms a heterotetramer with UvrA during the search for lesions. Interacts with UvrC in an incision complex.

It is found in the cytoplasm. In terms of biological role, the UvrABC repair system catalyzes the recognition and processing of DNA lesions. A damage recognition complex composed of 2 UvrA and 2 UvrB subunits scans DNA for abnormalities. Upon binding of the UvrA(2)B(2) complex to a putative damaged site, the DNA wraps around one UvrB monomer. DNA wrap is dependent on ATP binding by UvrB and probably causes local melting of the DNA helix, facilitating insertion of UvrB beta-hairpin between the DNA strands. Then UvrB probes one DNA strand for the presence of a lesion. If a lesion is found the UvrA subunits dissociate and the UvrB-DNA preincision complex is formed. This complex is subsequently bound by UvrC and the second UvrB is released. If no lesion is found, the DNA wraps around the other UvrB subunit that will check the other stand for damage. In Nitratidesulfovibrio vulgaris (strain DP4) (Desulfovibrio vulgaris), this protein is UvrABC system protein B.